The primary structure comprises 172 residues: Translocon-associated protein subunit delta (172 aa).

Positions 1 to 23 (MAAMASFGALALLLLSGLSCCSE) are cleaved as a signal peptide. The Lumenal segment spans residues 24-143 (ACLEPQITPS…SVDHRGTWNG (120 aa)). The cysteines at positions 25 and 56 are disulfide-linked. Lys-72 participates in a covalent cross-link: Glycyl lysine isopeptide (Lys-Gly) (interchain with G-Cter in ubiquitin). Residues 144-164 (PWVSTEVLAAVIGIVIYYLAF) traverse the membrane as a helical segment. At 165–172 (SAKSHIQA) the chain is on the cytoplasmic side.

It belongs to the TRAP-delta family. Heterotetramer of TRAP-alpha, TRAP-beta, TRAP-delta and TRAP-gamma.

The protein localises to the endoplasmic reticulum membrane. Its function is as follows. TRAP proteins are part of a complex whose function is to bind calcium to the ER membrane and thereby regulate the retention of ER resident proteins. The chain is Translocon-associated protein subunit delta (Ssr4) from Mus musculus (Mouse).